The following is a 64-amino-acid chain: Large ribosomal subunit protein bL35 (64 aa).

This sequence belongs to the bacterial ribosomal protein bL35 family.

The protein is Large ribosomal subunit protein bL35 of Streptomyces avermitilis (strain ATCC 31267 / DSM 46492 / JCM 5070 / NBRC 14893 / NCIMB 12804 / NRRL 8165 / MA-4680).